A 430-amino-acid polypeptide reads, in one-letter code: Adenylosuccinate synthetase (430 aa).

Residues 13–19 (GDEGKGK) and 41–43 (GHT) contribute to the GTP site. Residue Asp-14 is the Proton acceptor of the active site. Positions 14 and 41 each coordinate Mg(2+). IMP-binding positions include 14-17 (DEGK), 39-42 (NAGH), Thr-130, Arg-144, Gln-225, Thr-240, and Arg-304. His-42 (proton donor) is an active-site residue. Residue 300 to 306 (STTGRAR) coordinates substrate. Residues Arg-306, 332–334 (KLD), and 414–416 (STG) each bind GTP.

Belongs to the adenylosuccinate synthetase family. In terms of assembly, homodimer. It depends on Mg(2+) as a cofactor.

Its subcellular location is the cytoplasm. It catalyses the reaction IMP + L-aspartate + GTP = N(6)-(1,2-dicarboxyethyl)-AMP + GDP + phosphate + 2 H(+). It participates in purine metabolism; AMP biosynthesis via de novo pathway; AMP from IMP: step 1/2. Functionally, plays an important role in the de novo pathway of purine nucleotide biosynthesis. Catalyzes the first committed step in the biosynthesis of AMP from IMP. In Pseudomonas entomophila (strain L48), this protein is Adenylosuccinate synthetase.